Here is a 361-residue protein sequence, read N- to C-terminus: DNA replication and repair protein RecF (361 aa).

An ATP-binding site is contributed by 30–37 (GPNGSGKT).

Belongs to the RecF family.

Its subcellular location is the cytoplasm. Functionally, the RecF protein is involved in DNA metabolism; it is required for DNA replication and normal SOS inducibility. RecF binds preferentially to single-stranded, linear DNA. It also seems to bind ATP. The polypeptide is DNA replication and repair protein RecF (Yersinia pseudotuberculosis serotype IB (strain PB1/+)).